The sequence spans 103 residues: Glycoprotein 24B (103 aa).

It belongs to the csb family. O-glycosylated.

Its subcellular location is the cell surface. In terms of biological role, cell-cell adhesion during early development. This chain is Glycoprotein 24B (csbB), found in Dictyostelium discoideum (Social amoeba).